The chain runs to 349 residues: Isopentenyl-diphosphate delta-isomerase (349 aa).

A substrate-binding site is contributed by 9–10 (RK). FMN is bound by residues 65–67 (AMT), S95, and N124. Residue 95-97 (STH) participates in substrate binding. Q154 is a binding site for substrate. E155 serves as a coordination point for Mg(2+). FMN-binding positions include K186, S211, T216, 262–264 (GLR), and 283–284 (SR).

The protein belongs to the IPP isomerase type 2 family. As to quaternary structure, homooctamer. Dimer of tetramers. FMN is required as a cofactor. It depends on NADPH as a cofactor. Mg(2+) serves as cofactor.

It localises to the cytoplasm. The enzyme catalyses isopentenyl diphosphate = dimethylallyl diphosphate. Its function is as follows. Involved in the biosynthesis of isoprenoids. Catalyzes the 1,3-allylic rearrangement of the homoallylic substrate isopentenyl (IPP) to its allylic isomer, dimethylallyl diphosphate (DMAPP). The chain is Isopentenyl-diphosphate delta-isomerase from Staphylococcus aureus (strain MSSA476).